The sequence spans 225 residues: Large ribosomal subunit protein bL25 (225 aa).

The tract at residues 197–225 (PQREEQMEDTDTAAADEEGDKEEDADKQE) is disordered. The span at 202-225 (QMEDTDTAAADEEGDKEEDADKQE) shows a compositional bias: acidic residues.

The protein belongs to the bacterial ribosomal protein bL25 family. CTC subfamily. As to quaternary structure, part of the 50S ribosomal subunit; part of the 5S rRNA/L5/L18/L25 subcomplex. Contacts the 5S rRNA. Binds to the 5S rRNA independently of L5 and L18.

This is one of the proteins that binds to the 5S RNA in the ribosome where it forms part of the central protuberance. The protein is Large ribosomal subunit protein bL25 of Dichelobacter nodosus (strain VCS1703A).